Here is a 387-residue protein sequence, read N- to C-terminus: 3-hydroxy-D-aspartate aldolase (387 aa).

Lys-62 carries the post-translational modification N6-(pyridoxal phosphate)lysine. Gln-85 contributes to the pyridoxal 5'-phosphate binding site. The interval 199–228 (HGQLRGPQGQAGRRHCPGERGRGRAGGRGL) is disordered. Residues Thr-238, 256–257 (GS), and Tyr-265 each bind pyridoxal 5'-phosphate. Residues His-355 and Asp-357 each contribute to the Mg(2+) site.

The protein belongs to the DSD1 family. In terms of assembly, homodimer. Pyridoxal 5'-phosphate serves as cofactor. Requires Mn(2+) as cofactor. The cofactor is Mg(2+). Co(2+) is required as a cofactor.

The catalysed reaction is (3S)-3-hydroxy-D-aspartate = glyoxylate + glycine. It carries out the reaction (3R)-3-hydroxy-D-aspartate = glyoxylate + glycine. Catalyzes the condensation of glyoxylate and glycine into (2R,3S)-beta-hydroxyaspartate ((3S)-3-hydroxy-D-aspartate). Functions in glyoxylate assimilation via the beta-hydroxyaspartate cycle (BHAC). In vitro catalyzes the cleavage of both D-erythro- and D-threo-3-hydroxyaspartate to glycine and glyoxylate. Also acts on D-threonine, D-3-phenylserine and D-3-3,4-methylenedioxyphenylserine. The protein is 3-hydroxy-D-aspartate aldolase (dhaa) of Paracoccus denitrificans.